Reading from the N-terminus, the 610-residue chain is MAASKPVEAAMAAAAAPASGNGVGSSGGTAAPGSGAGTLPRWHVALAIGAPLLLGAGAMYLWSRRRRRREAGGRGDASGLKRNSERKTPEGRASPALGSGPDGSGDSLEMSSLDRAQAAKNKGNKYFKAGKYEQAIQCYTEAISLCPTEKNADLSTFYQNRAAAFEQLQKWKEVAQDCTKAVELNPKYVKALFRRAKAHEKLDNKKECLEDVTAVCILEGFQNEQSMLLADKVLKLLGKENAKEKYKNREPLMPSPQFIKSYFSSFTDDIISQPMLKGEKSDEDKDKEGEALEVKENSGYLKAKQYMEEENYDKIISECSKEIDAQGKYMAEALLLRATFYLLIGSANAAKPDLDKVISLKEANVKLRANALIKRGTMCMQQQQPMLSTQDFNMAAEIDPMNSDVYHHRGQLKILLDLVEEAVADFDACIRLRPKFALAQAQKCFALYRQAYTANNSSQVQAAMKGFEEVIKKFPRCAEGYALYAQALTDQQQFGKADEMYDKCIDLEPDNATTYVHKGLLQLQWKQDLDKGLELISKAIEIDNKCDFAYETMGTIEVQRGNMEKAIDMFNKAINLAKSEMEMAHLYSLCDAAHAQTEVAKKYGLKPPTL.

An N-acetylalanine modification is found at Ala2. Topologically, residues 2-41 (AASKPVEAAMAAAAAPASGNGVGSSGGTAAPGSGAGTLPR) are mitochondrial intermembrane. Residues 42 to 62 (WHVALAIGAPLLLGAGAMYLW) traverse the membrane as a helical segment. Topologically, residues 63-610 (SRRRRRREAG…KKYGLKPPTL (548 aa)) are cytoplasmic. The disordered stretch occupies residues 69–109 (REAGGRGDASGLKRNSERKTPEGRASPALGSGPDGSGDSLE). Residue Arg74 is modified to Omega-N-methylarginine. Low complexity predominate over residues 93 to 108 (ASPALGSGPDGSGDSL). Residues Ser94, Ser99, Ser104, Ser107, and Ser112 each carry the phosphoserine modification. TPR repeat units follow at residues 116-149 (AQAA…CPTE) and 155-188 (STFY…NPKY). Residue Lys187 is modified to N6-acetyllysine. Lys277 participates in a covalent cross-link: Glycyl lysine isopeptide (Lys-Gly) (interchain with G-Cter in SUMO2). 8 TPR repeats span residues 296–329 (ENSG…QGKY), 331–364 (AEAL…KEAN), 369–402 (ANAL…DPMN), 403–436 (SDVY…RPKF), 444–477 (CFAL…FPRC), 478–511 (AEGY…EPDN), 513–546 (TTYV…DNKC), and 547–580 (DFAY…AKSE).

Belongs to the Tom70 family. Forms part of the preprotein translocase complex of the outer mitochondrial membrane (TOM complex) which consists of at least 7 different proteins (TOMM5, TOMM6, TOMM7, TOMM20, TOMM22, TOMM40 and TOMM70). Interacts with CAPN8. Interacts with TRADD, TRAF6 and STING. Interacts with MAVS. Interacts with HSPA8 and HSP90AA1; both interactions are required for preprotein mitochondrial import. The interaction with HSP90AA1 is direct and mediates the association of TOMM70 with IRF3 and TBK1. Upon mitochondrial depolarization, interacts with PINK1; the interaction is required for PINK1-TOM-TIM23 supercomplex formation which is critical for PINK1 stabilization at the outer mitochondrial membrane, kinase activation and downstream mitophagy.

Its subcellular location is the mitochondrion outer membrane. Acts as a receptor of the preprotein translocase complex of the outer mitochondrial membrane (TOM complex). Recognizes and mediates the translocation of mitochondrial preproteins from the cytosol into the mitochondria in a chaperone dependent manner. Mediates TBK1 and IRF3 activation induced by MAVS in response to Sendai virus infection and promotes host antiviral responses during virus infection. This is Mitochondrial import receptor subunit TOM70 from Rattus norvegicus (Rat).